The following is a 222-amino-acid chain: Probable pyridoxal 5'-phosphate synthase subunit SNO3 (222 aa).

58-60 contributes to the L-glutamine binding site; sequence GES. The active-site Nucleophile is the Cys91. Residues Arg120 and 151–152 each bind L-glutamine; that span reads IR. Residues His197 and Glu199 each act as charge relay system in the active site.

It belongs to the glutaminase PdxT/SNO family.

The enzyme catalyses aldehydo-D-ribose 5-phosphate + D-glyceraldehyde 3-phosphate + L-glutamine = pyridoxal 5'-phosphate + L-glutamate + phosphate + 3 H2O + H(+). It catalyses the reaction L-glutamine + H2O = L-glutamate + NH4(+). Its pathway is cofactor biosynthesis; pyridoxal 5'-phosphate biosynthesis. In terms of biological role, catalyzes the hydrolysis of glutamine to glutamate and ammonia as part of the biosynthesis of pyridoxal 5'-phosphate. The resulting ammonia molecule is channeled to the active site of a SNZ isoform. This Saccharomyces cerevisiae (strain ATCC 204508 / S288c) (Baker's yeast) protein is Probable pyridoxal 5'-phosphate synthase subunit SNO3 (SNO3).